A 725-amino-acid polypeptide reads, in one-letter code: FYVE, RhoGEF and PH domain-containing protein 3 (725 aa).

Positions Met-1–Gln-151 are disordered. Residues Glu-124–Ser-136 show a composition bias toward acidic residues. Residue Ser-128 is modified to Phosphoserine. The DH domain maps to Lys-157 to Ala-341. In terms of domain architecture, PH 1 spans Glu-370–Glu-469. The tract at residues Gln-487–Asp-532 is disordered. Residues Thr-500 to Glu-512 show a composition bias toward low complexity. The segment covering Glu-521–Asp-532 has biased composition (basic and acidic residues). An FYVE-type zinc finger spans residues Asp-532–Pro-588. Zn(2+)-binding residues include Cys-538, Cys-541, Cys-555, Cys-558, Cys-563, Cys-566, Cys-580, and Cys-583. In terms of domain architecture, PH 2 spans Pro-604–His-703. The disordered stretch occupies residues His-703–Pro-725.

It is found in the cytoplasm. Its subcellular location is the cytoskeleton. In terms of biological role, promotes the formation of filopodia. May activate CDC42, a member of the Ras-like family of Rho- and Rac proteins, by exchanging bound GDP for free GTP. Plays a role in regulating the actin cytoskeleton and cell shape. This chain is FYVE, RhoGEF and PH domain-containing protein 3 (FGD3), found in Homo sapiens (Human).